The primary structure comprises 290 residues: Acetyl-coenzyme A carboxylase carboxyl transferase subunit beta (290 aa).

In terms of domain architecture, CoA carboxyltransferase N-terminal spans 28–290 (IMTKCPKCKK…SRGGDEWHTN (263 aa)). Zn(2+) is bound by residues cysteine 32, cysteine 35, cysteine 51, and cysteine 54. Residues 32–54 (CPKCKKIMYTKELVKNLRVCISC) form a C4-type zinc finger.

This sequence belongs to the AccD/PCCB family. In terms of assembly, acetyl-CoA carboxylase is a heterohexamer composed of biotin carboxyl carrier protein (AccB), biotin carboxylase (AccC) and two subunits each of ACCase subunit alpha (AccA) and ACCase subunit beta (AccD). The cofactor is Zn(2+).

It localises to the cytoplasm. It catalyses the reaction N(6)-carboxybiotinyl-L-lysyl-[protein] + acetyl-CoA = N(6)-biotinyl-L-lysyl-[protein] + malonyl-CoA. It participates in lipid metabolism; malonyl-CoA biosynthesis; malonyl-CoA from acetyl-CoA: step 1/1. Its function is as follows. Component of the acetyl coenzyme A carboxylase (ACC) complex. Biotin carboxylase (BC) catalyzes the carboxylation of biotin on its carrier protein (BCCP) and then the CO(2) group is transferred by the transcarboxylase to acetyl-CoA to form malonyl-CoA. The polypeptide is Acetyl-coenzyme A carboxylase carboxyl transferase subunit beta (Anoxybacillus flavithermus (strain DSM 21510 / WK1)).